A 221-amino-acid polypeptide reads, in one-letter code: Translation initiation factor 6 (221 aa).

The protein belongs to the eIF-6 family.

Binds to the 50S ribosomal subunit and prevents its association with the 30S ribosomal subunit to form the 70S initiation complex. The polypeptide is Translation initiation factor 6 (Methanosphaerula palustris (strain ATCC BAA-1556 / DSM 19958 / E1-9c)).